The chain runs to 801 residues: H(+)/Cl(-) exchange transporter 3 (801 aa).

Topologically, residues 1 to 125 are cytoplasmic; it reads MESEQLFHRG…WEMTKSLYDA (125 aa). 3 consecutive short sequence motifs (di-leucine internalization motif; mediates targeting to late endosome and lysosome membranes) follow at residues 28–29, 46–47, and 71–75; these read LL and LLDLL. The helical transmembrane segment at 126–163 threads the bilayer; that stretch reads WSGWLVVTLTGLASGALAGLIDIAADWMTDLKEGICLS. An N-linked (GlcNAc...) asparagine glycan is attached at asparagine 177. A helical membrane pass occupies residues 209-232; it reads MNYIMYIFWALSFAFLAVSLVKVF. The short motif at 238–242 is the Selectivity filter part_1 element; it reads GSGIP. Serine 239 is a chloride binding site. The helical intramembrane region spans 241–248; it reads IPEIKTIL. Helical transmembrane passes span 258 to 276 and 282 to 301; these read GKWT…VASG and EGPL…YLFP. The Selectivity filter part_2 motif lies at 280–284; that stretch reads GKEGP. 2 intramembrane regions (helical) span residues 313–325 and 329–337; these read VLSA…VSVA and PIGGVLFSL. The next 3 helical transmembrane spans lie at 349-367, 391-416, and 423-443; these read LWRS…RSIN, FPFI…AWCR, and FGKY…VIAF. Residues asparagine 451 and asparagine 479 are each glycosylated (N-linked (GlcNAc...) asparagine). A helical transmembrane segment spans residues 500 to 520; it reads IWQLCLALIFKIIMTVFTFGI. A Selectivity filter part_3 motif is present at residues 525–529; the sequence is GLFIP. A chloride-binding site is contributed by phenylalanine 527. 2 intramembrane regions (helical) span residues 555-569 and 573-584; these read GLYA…LGGV and TVSLVVIVFELT. The note=Loop between two helices intramembrane region spans 585–588; sequence GGLE. Residues 589-607 traverse the membrane as a helical segment; it reads YIVPLMAAVMTSKWVGDAF. Residues 608–801 are Cytoplasmic-facing; sequence GREGIYEAHI…NQDPASIMFN (194 aa). Residue tyrosine 613 coordinates chloride. 2 CBS domains span residues 641–705 and 738–795; these read MRPR…ARKK and LDMS…NQDP. ATP is bound by residues 672–674 and 779–782; these read YNG and TKKD.

It belongs to the chloride channel (TC 2.A.49) family. ClC-3/CLCN3 subfamily. As to quaternary structure, monomer and homodimer. Forms heterodimers with CLCN4. In terms of processing, N-glycosylated.

Its subcellular location is the early endosome membrane. The protein resides in the late endosome membrane. The protein localises to the lysosome membrane. It localises to the cell membrane. Strongly outwardly rectifying, electrogenic H(+)/Cl(-)exchanger which mediates the exchange of chloride ions against protons. The CLC channel family contains both chloride channels and proton-coupled anion transporters that exchange chloride or another anion for protons. The presence of conserved gating glutamate residues is typical for family members that function as antiporters. The protein is H(+)/Cl(-) exchange transporter 3 (CLCN3) of Pongo abelii (Sumatran orangutan).